Consider the following 456-residue polypeptide: Shufflon protein D' (456 aa).

The tract at residues 1 to 361 (MKKYDRGWAS…TGAILSCQSG (361 aa)) is constant region. The variable region stretch occupies residues 362-456 (TWRKSNSGST…KCSYVVACQN (95 aa)).

The protein is Shufflon protein D' of Escherichia coli.